A 77-amino-acid chain; its full sequence is Acyl carrier protein (77 aa).

A Carrier domain is found at 1-76 (MSLEDDVKAI…DVIKYIQEHQ (76 aa)). Position 36 is an O-(pantetheine 4'-phosphoryl)serine (Ser-36).

Belongs to the acyl carrier protein (ACP) family. 4'-phosphopantetheine is transferred from CoA to a specific serine of apo-ACP by AcpS. This modification is essential for activity because fatty acids are bound in thioester linkage to the sulfhydryl of the prosthetic group.

It localises to the cytoplasm. Its pathway is lipid metabolism; fatty acid biosynthesis. Functionally, carrier of the growing fatty acid chain in fatty acid biosynthesis. The protein is Acyl carrier protein of Chlamydia trachomatis serovar L2 (strain ATCC VR-902B / DSM 19102 / 434/Bu).